Consider the following 166-residue polypeptide: Regulatory protein RecX (166 aa).

It belongs to the RecX family.

Its subcellular location is the cytoplasm. In terms of biological role, modulates RecA activity. The protein is Regulatory protein RecX of Shigella boydii serotype 18 (strain CDC 3083-94 / BS512).